A 1571-amino-acid chain; its full sequence is Phosphatidylinositol 3-kinase 1 (1571 aa).

Low complexity predominate over residues 1–73 (MNSIESSSND…NNDNNNNNNN (73 aa)). 3 disordered regions span residues 1 to 119 (MNSI…HVNN), 157 to 195 (GYDV…RTRN), and 283 to 430 (NSKL…IIKR). A compositionally biased stretch (basic and acidic residues) spans 74-85 (IDKKRKDSKNKQ). Residues 101 to 119 (NSNDSNCSSGSSSGGHVNN) are compositionally biased toward low complexity. A compositionally biased stretch (basic and acidic residues) spans 283-292 (NSKLDTEEKP). Positions 294-324 (TTTTTTTTTSTSISTSTPTTTTTTTTNTSTT) are enriched in low complexity. Polar residues predominate over residues 325–337 (NDITIKPKTSPTK). 2 stretches are compositionally biased toward low complexity: residues 360 to 382 (KVST…PTGK) and 405 to 424 (NNTN…NNNN). The PI3K-ABD domain occupies 530–627 (IKTSFNILFL…IPKLKVIEKS (98 aa)). The PI3K-RBD domain occupies 700–789 (GNKILISIFL…GTKPQLTLIQ (90 aa)). Positions 851–1020 (IKKPFRVKVM…GLTLEFEEFN (170 aa)) constitute a C2 PI3K-type domain. The region spanning 1040–1216 (QPPTNINSNE…GILLESYLYA (177 aa)) is the PIK helical domain. The PI3K/PI4K catalytic domain maps to 1280–1558 (IINKSKYMDS…LIHESLATKT (279 aa)). Residues 1286-1292 (YMDSKKL) are G-loop. The segment at 1424–1432 (GIGDRHNDN) is catalytic loop. Positions 1443-1469 (HIDFGHFLGNYKKKFGFKRERAPFVFT) are activation loop.

Belongs to the PI3/PI4-kinase family.

The enzyme catalyses a 1,2-diacyl-sn-glycero-3-phospho-(1D-myo-inositol) + ATP = a 1,2-diacyl-sn-glycero-3-phospho-(1D-myo-inositol-3-phosphate) + ADP + H(+). This chain is Phosphatidylinositol 3-kinase 1 (pikA), found in Dictyostelium discoideum (Social amoeba).